Reading from the N-terminus, the 764-residue chain is Polyribonucleotide nucleotidyltransferase (764 aa).

Residues Asp-555 and Asp-561 each coordinate Mg(2+). One can recognise a KH domain in the interval 621-680 (PHITSINIPQNKIGEVIGPKGKTINQITEETGANITIEDDGTVFISAVGGESAREAEEKI). The region spanning 692–761 (GDRFLGTVVK…NRGKISLVLV (70 aa)) is the S1 motif domain.

This sequence belongs to the polyribonucleotide nucleotidyltransferase family. Requires Mg(2+) as cofactor.

It is found in the cytoplasm. The catalysed reaction is RNA(n+1) + phosphate = RNA(n) + a ribonucleoside 5'-diphosphate. In terms of biological role, involved in mRNA degradation. Catalyzes the phosphorolysis of single-stranded polyribonucleotides processively in the 3'- to 5'-direction. This Corynebacterium jeikeium (strain K411) protein is Polyribonucleotide nucleotidyltransferase.